Reading from the N-terminus, the 508-residue chain is MSQEKYIMAIDQGTTSSRAIIFNQKGEKVSSSQKEFPQIFPHAGWVEHNANQIWNSVQSVIAGAFIESSIKPSQIEAIGITNQRETTVVWDKKTGVPIYNAIVWQSRQTAPIAEQLKQDGHTKMIHEKTGLVIDAYFSATKIRWILDHVPGAQERAEKGELLFGTIDTWLVWKLTDGAVHVTDYSNAARTMLYNIKDLTWDDEILELLNIPKDMLPEVKSNSEIYGKTAAFHFYGGEVPISGMAGDQQAALFGQLAFEPGMVKNTYGTGSFIIMNTGDEMQLSSNNLLTTIGYGINGKVHYALEGSIFIAGSAIQWLRDGLKMIETSPESEQLALASTSDDEVYVVPAFTGLGTPYWDSNARGSVFGLTRGTSKEDFVKATLQSIAYQVRDVIDTMQVDSGIDIQQLRVDGGAAMNNMLMQFQADILGIDIARAKNLETTALGAAFLAGLAVGYWEDMDALKELNATGQLFKASMNESRKEKLYKGWKRAVKATQVFTQEEDADDDAK.

Threonine 14 serves as a coordination point for ADP. ATP-binding residues include threonine 14, threonine 15, and serine 16. Threonine 14 contacts sn-glycerol 3-phosphate. An ADP-binding site is contributed by arginine 18. The sn-glycerol 3-phosphate site is built by arginine 84, glutamate 85, and tyrosine 136. Residues arginine 84, glutamate 85, and tyrosine 136 each contribute to the glycerol site. Histidine 232 bears the Phosphohistidine; by HPr mark. Aspartate 246 lines the sn-glycerol 3-phosphate pocket. The glycerol site is built by aspartate 246 and glutamine 247. Residues threonine 268 and glycine 311 each coordinate ADP. ATP is bound by residues threonine 268, glycine 311, glutamine 315, and glycine 412. ADP-binding residues include glycine 412 and asparagine 416.

Belongs to the FGGY kinase family. In terms of assembly, homotetramer and homodimer (in equilibrium). The phosphoenolpyruvate-dependent sugar phosphotransferase system (PTS), including enzyme I, and histidine-containing protein (HPr) are required for the phosphorylation, which leads to the activation of the enzyme.

It catalyses the reaction glycerol + ATP = sn-glycerol 3-phosphate + ADP + H(+). The protein operates within polyol metabolism; glycerol degradation via glycerol kinase pathway; sn-glycerol 3-phosphate from glycerol: step 1/1. Its activity is regulated as follows. Activated by phosphorylation and inhibited by fructose 1,6-bisphosphate (FBP). In terms of biological role, key enzyme in the regulation of glycerol uptake and metabolism. Catalyzes the phosphorylation of glycerol to yield sn-glycerol 3-phosphate. The chain is Glycerol kinase from Streptococcus pyogenes serotype M28 (strain MGAS6180).